The following is a 192-amino-acid chain: Pyridoxal 5'-phosphate synthase subunit PdxT (192 aa).

Residue 47-49 (GES) coordinates L-glutamine. C79 acts as the Nucleophile in catalysis. L-glutamine is bound by residues R106 and 134–135 (IR). Residues H170 and E172 each act as charge relay system in the active site.

It belongs to the glutaminase PdxT/SNO family. In the presence of PdxS, forms a dodecamer of heterodimers. Only shows activity in the heterodimer.

The enzyme catalyses aldehydo-D-ribose 5-phosphate + D-glyceraldehyde 3-phosphate + L-glutamine = pyridoxal 5'-phosphate + L-glutamate + phosphate + 3 H2O + H(+). The catalysed reaction is L-glutamine + H2O = L-glutamate + NH4(+). The protein operates within cofactor biosynthesis; pyridoxal 5'-phosphate biosynthesis. Its function is as follows. Catalyzes the hydrolysis of glutamine to glutamate and ammonia as part of the biosynthesis of pyridoxal 5'-phosphate. The resulting ammonia molecule is channeled to the active site of PdxS. This is Pyridoxal 5'-phosphate synthase subunit PdxT from Geobacillus sp. (strain WCH70).